Consider the following 94-residue polypeptide: Large ribosomal subunit protein bL25 (94 aa).

The protein belongs to the bacterial ribosomal protein bL25 family. Part of the 50S ribosomal subunit; part of the 5S rRNA/L5/L18/L25 subcomplex. Contacts the 5S rRNA. Binds to the 5S rRNA independently of L5 and L18.

Its function is as follows. This is one of the proteins that binds to the 5S RNA in the ribosome where it forms part of the central protuberance. In Edwardsiella ictaluri (strain 93-146), this protein is Large ribosomal subunit protein bL25.